The primary structure comprises 427 residues: Probable WRKY transcription factor 35 (427 aa).

Disordered regions lie at residues M1 to V45 and Y266 to F336. Residues S23–T40 are compositionally biased toward pro residues. The WRKY DNA-binding region spans S209–P275. Positions S284–S310 are enriched in low complexity. A compositionally biased stretch (polar residues) spans R311–H333.

This sequence belongs to the WRKY group II-e family.

It is found in the nucleus. In terms of biological role, transcription factor. Interacts specifically with the W box (5'-(T)TGAC[CT]-3'), a frequently occurring elicitor-responsive cis-acting element. The polypeptide is Probable WRKY transcription factor 35 (WRKY35) (Arabidopsis thaliana (Mouse-ear cress)).